We begin with the raw amino-acid sequence, 283 residues long: Bifunctional protein FolD (283 aa).

NADP(+) is bound by residues 165–167 (GAS) and serine 190.

Belongs to the tetrahydrofolate dehydrogenase/cyclohydrolase family. In terms of assembly, homodimer.

It carries out the reaction (6R)-5,10-methylene-5,6,7,8-tetrahydrofolate + NADP(+) = (6R)-5,10-methenyltetrahydrofolate + NADPH. The enzyme catalyses (6R)-5,10-methenyltetrahydrofolate + H2O = (6R)-10-formyltetrahydrofolate + H(+). It functions in the pathway one-carbon metabolism; tetrahydrofolate interconversion. Its function is as follows. Catalyzes the oxidation of 5,10-methylenetetrahydrofolate to 5,10-methenyltetrahydrofolate and then the hydrolysis of 5,10-methenyltetrahydrofolate to 10-formyltetrahydrofolate. The chain is Bifunctional protein FolD from Cupriavidus necator (strain ATCC 17699 / DSM 428 / KCTC 22496 / NCIMB 10442 / H16 / Stanier 337) (Ralstonia eutropha).